A 276-amino-acid chain; its full sequence is Undecaprenyl-diphosphatase 1 (276 aa).

6 helical membrane passes run 43–63 (RAMA…VWEF), 85–105 (ANLL…ADLI), 109–129 (LFNP…MLWA), 184–204 (ATEF…VYSG), 214–234 (ADFP…MIAV), and 254–274 (IVFG…WTAA).

It belongs to the UppP family.

It localises to the cell inner membrane. The enzyme catalyses di-trans,octa-cis-undecaprenyl diphosphate + H2O = di-trans,octa-cis-undecaprenyl phosphate + phosphate + H(+). Catalyzes the dephosphorylation of undecaprenyl diphosphate (UPP). Confers resistance to bacitracin. This is Undecaprenyl-diphosphatase 1 from Pseudomonas fluorescens (strain Pf0-1).